The primary structure comprises 314 residues: DNA-directed RNA polymerase subunit alpha (314 aa).

The interval 1–227 (MIEFQKPTIS…EHLALFIDLS (227 aa)) is alpha N-terminal domain (alpha-NTD). The tract at residues 241 to 314 (VETVMENKEP…GQSFKQETEN (74 aa)) is alpha C-terminal domain (alpha-CTD).

This sequence belongs to the RNA polymerase alpha chain family. Homodimer. The RNAP catalytic core consists of 2 alpha, 1 beta, 1 beta' and 1 omega subunit. When a sigma factor is associated with the core the holoenzyme is formed, which can initiate transcription.

It catalyses the reaction RNA(n) + a ribonucleoside 5'-triphosphate = RNA(n+1) + diphosphate. Its function is as follows. DNA-dependent RNA polymerase catalyzes the transcription of DNA into RNA using the four ribonucleoside triphosphates as substrates. The sequence is that of DNA-directed RNA polymerase subunit alpha from Oenococcus oeni (strain ATCC BAA-331 / PSU-1).